The primary structure comprises 607 residues: MASITASHHFVSRSQTSLDTKSTLSQIGLRNHTLTHNGLRAVNKLDGLQSRTNTKVTPKMASRTETKRPGCSATIVCGKGMNLIFVGTEVGPWSKTGGLGDVLGGLPPALAARGHRVMTISPRYDQYKDAWDTSVAVEVKVGDSIEIVRFFHCYKRGVDRVFVDHPMFLEKVWGKTGSKIYGPKAGLDYLDNELRFSLLCQAALEAPKVLNLNSSNYFSGPYGEDVLFIANDWHTALIPCYLKSMYQSRGIYLNAKVAFCIHNIAYQGRFSFSDFPLLNLPDEFRGSFDFIDGYEKPVKGRKINWMKAGILESHRVVTVSPYYAQELVSAVDKGVELDSVLRKTCITGIVNGMDTQEWNPATDKYTDVKYDITTVMDAKPLLKEALQAAVGLPVDKKIPLIGFIGRLEEQKGSDILVAAIHKFIGLDVQIVVLGTGKKEFEQEIEQLEVLYPNKAKGVAKFNVPLAHMITAGADFMLVPSRFEPCGLIQLHAMRYGTVPICASTGGLVDTVKEGYTGFHMGAFNVECDVVDPADVLKIVTTVARALAVYGTLAFAEMIKNCMSEELSWKEPAKKWETLLLGLGASGSEPGVEGEEIAPLAKENVATP.

A chloroplast-targeting transit peptide spans 1 to 77 (MASITASHHF…RPGCSATIVC (77 aa)). Lys95 is a binding site for ADP-alpha-D-glucose. Residues 585–607 (SGSEPGVEGEEIAPLAKENVATP) are disordered.

The protein belongs to the glycosyltransferase 1 family. Bacterial/plant glycogen synthase subfamily.

The protein localises to the plastid. It is found in the chloroplast. It localises to the amyloplast. The catalysed reaction is an NDP-alpha-D-glucose + [(1-&gt;4)-alpha-D-glucosyl](n) = [(1-&gt;4)-alpha-D-glucosyl](n+1) + a ribonucleoside 5'-diphosphate + H(+). It participates in glycan biosynthesis; starch biosynthesis. The polypeptide is Granule-bound starch synthase 1, chloroplastic/amyloplastic (WAXY) (Solanum tuberosum (Potato)).